The following is a 274-amino-acid chain: Large ribosomal subunit protein uL2cz/uL2cy (274 aa).

Disordered regions lie at residues 1 to 20 (MAIH…AVDS) and 223 to 274 (MNPV…RRSK).

Belongs to the universal ribosomal protein uL2 family. As to quaternary structure, part of the 50S ribosomal subunit.

It localises to the plastid. The protein resides in the chloroplast. This Eucalyptus globulus subsp. globulus (Tasmanian blue gum) protein is Large ribosomal subunit protein uL2cz/uL2cy (rpl2-A).